We begin with the raw amino-acid sequence, 376 residues long: Zinc transporter 7 (376 aa).

Residues 1–37 (MLPLSIKDDEYKPPKFNLFRKISGWFRSILSDKTSRN) lie on the Cytoplasmic side of the membrane. The helical transmembrane segment at 38–58 (LFFFLCLNLSFAFVELLYGIW) threads the bilayer. Topologically, residues 59-67 (SNCLGLISD) are lumenal. The chain crosses the membrane as a helical span at residues 68–88 (SFHMFFDSTAILAGLAASVIS). Over 89–102 (KWRDNDAFSYGYVR) the chain is Cytoplasmic. The helical transmembrane segment at 103–123 (AEVLAGFVNGLFLIFTAFFIF) threads the bilayer. Topologically, residues 124–140 (SEGVERALAPPDVHHER) are lumenal. Residues 141 to 161 (LLLVSILGFVVNLVGIFVFKH) traverse the membrane as a helical segment. Positions 161-218 (HGGHGHSHGSGHGHSHSLFNGALDQTHGHGDHCHSHELKHGAAHSHDHAHGHGHFHSH) are his-rich loop. Topologically, residues 162–236 (GGHGHSHGSG…TGPSRQILQG (75 aa)) are cytoplasmic. Residues 188–222 (GHGDHCHSHELKHGAAHSHDHAHGHGHFHSHDGPS) are compositionally biased toward basic and acidic residues. The disordered stretch occupies residues 188 to 226 (GHGDHCHSHELKHGAAHSHDHAHGHGHFHSHDGPSLKET). Residues 237–257 (VFLHILADTLGSIGVIASAIM) traverse the membrane as a helical segment. Residues 258 to 262 (MQNFG) are Lumenal-facing. A helical transmembrane segment spans residues 263 to 283 (LMIADPICSILIAMLIVISVI). Residues 284 to 376 (PLLRESVGIL…LYVQIDFAAM (93 aa)) lie on the Cytoplasmic side of the membrane.

The protein belongs to the cation diffusion facilitator (CDF) transporter (TC 2.A.4) family. SLC30A subfamily. Homooligomer.

Its subcellular location is the golgi apparatus membrane. It is found in the cytoplasmic vesicle. The protein localises to the golgi apparatus. The protein resides in the trans-Golgi network. It localises to the sarcoplasmic reticulum. Its subcellular location is the mitochondrion. It carries out the reaction Zn(2+)(in) = Zn(2+)(out). Functionally, zinc ion transporter mediating zinc entry from the cytosol into the lumen of organelles along the secretory pathway. By contributing to zinc ion homeostasis within the early secretory pathway, regulates the activation and folding of enzymes like alkaline phosphatases. The protein is Zinc transporter 7 (SLC30A7) of Bos taurus (Bovine).